We begin with the raw amino-acid sequence, 345 residues long: S-adenosylmethionine:tRNA ribosyltransferase-isomerase (345 aa).

This sequence belongs to the QueA family. Monomer.

Its subcellular location is the cytoplasm. It catalyses the reaction 7-aminomethyl-7-carbaguanosine(34) in tRNA + S-adenosyl-L-methionine = epoxyqueuosine(34) in tRNA + adenine + L-methionine + 2 H(+). It functions in the pathway tRNA modification; tRNA-queuosine biosynthesis. Functionally, transfers and isomerizes the ribose moiety from AdoMet to the 7-aminomethyl group of 7-deazaguanine (preQ1-tRNA) to give epoxyqueuosine (oQ-tRNA). The chain is S-adenosylmethionine:tRNA ribosyltransferase-isomerase from Shewanella amazonensis (strain ATCC BAA-1098 / SB2B).